The primary structure comprises 347 residues: Ribosomal RNA small subunit methyltransferase C (347 aa).

Belongs to the methyltransferase superfamily. RsmC family. As to quaternary structure, monomer.

The protein localises to the cytoplasm. It catalyses the reaction guanosine(1207) in 16S rRNA + S-adenosyl-L-methionine = N(2)-methylguanosine(1207) in 16S rRNA + S-adenosyl-L-homocysteine + H(+). In terms of biological role, specifically methylates the guanine in position 1207 of 16S rRNA in the 30S particle. The sequence is that of Ribosomal RNA small subunit methyltransferase C from Shewanella putrefaciens (strain CN-32 / ATCC BAA-453).